The following is a 224-amino-acid chain: Putative cytochrome c-type biogenesis protein DbsD-like (224 aa).

A run of 5 helical transmembrane segments spans residues 32 to 52 (FIFLSGLFTSLSPCIISILPV), 74 to 94 (FLFCLGTISSFITLGILATLI), 104 to 124 (GIPTISAVVIIYMGLNLLNIV), 150 to 170 (GIGIAISSCSTPIFVTLLVWI), and 176 to 196 (IFTGLIFILIYSIGYIFPIII).

This sequence belongs to the DsbD family.

The protein localises to the plastid. The protein resides in the chloroplast membrane. In terms of biological role, could be involved in cytochrome c synthesis. This Pyropia yezoensis (Susabi-nori) protein is Putative cytochrome c-type biogenesis protein DbsD-like.